Consider the following 198-residue polypeptide: Elongation factor Ts (198 aa).

Positions 81-84 (TDFV) are involved in Mg(2+) ion dislocation from EF-Tu.

Belongs to the EF-Ts family.

Its subcellular location is the cytoplasm. Functionally, associates with the EF-Tu.GDP complex and induces the exchange of GDP to GTP. It remains bound to the aminoacyl-tRNA.EF-Tu.GTP complex up to the GTP hydrolysis stage on the ribosome. This is Elongation factor Ts from Dictyoglomus turgidum (strain DSM 6724 / Z-1310).